The sequence spans 357 residues: 3-isopropylmalate dehydrogenase (357 aa).

76–89 provides a ligand contact to NAD(+); that stretch reads GPKWDALDSNIRPE. 4 residues coordinate substrate: Arg-96, Arg-106, Arg-134, and Asp-224. Residues Asp-224, Asp-248, and Asp-252 each contribute to the Mg(2+) site. Residue 282 to 294 participates in NAD(+) binding; sequence GSAPDIAGQGVAN.

The protein belongs to the isocitrate and isopropylmalate dehydrogenases family. LeuB type 1 subfamily. In terms of assembly, homodimer. The cofactor is Mg(2+). Mn(2+) is required as a cofactor.

It localises to the cytoplasm. The enzyme catalyses (2R,3S)-3-isopropylmalate + NAD(+) = 4-methyl-2-oxopentanoate + CO2 + NADH. It functions in the pathway amino-acid biosynthesis; L-leucine biosynthesis; L-leucine from 3-methyl-2-oxobutanoate: step 3/4. Its function is as follows. Catalyzes the oxidation of 3-carboxy-2-hydroxy-4-methylpentanoate (3-isopropylmalate) to 3-carboxy-4-methyl-2-oxopentanoate. The product decarboxylates to 4-methyl-2 oxopentanoate. This is 3-isopropylmalate dehydrogenase from Saccharophagus degradans (strain 2-40 / ATCC 43961 / DSM 17024).